The sequence spans 460 residues: Dynactin subunit 4 (460 aa).

A2 carries the post-translational modification N-acetylalanine. Residues 152-172 adopt a coiled-coil conformation; the sequence is QQLAQKEKVERDRKKLARRRN. S196 carries the phosphoserine modification. Residue K215 forms a Glycyl lysine isopeptide (Lys-Gly) (interchain with G-Cter in SUMO2) linkage. The residue at position 407 (T407) is a Phosphothreonine.

This sequence belongs to the dynactin subunit 4 family. Subunit of dynactin, a multiprotein complex part of a tripartite complex with dynein and a adapter, such as BICDL1, BICD2 or HOOK3. The dynactin complex is built around ACTR1A/ACTB filament and consists of an actin-related filament composed of a shoulder domain, a pointed end and a barbed end. Its length is defined by its flexible shoulder domain. The soulder is composed of 2 DCTN1 subunits, 4 DCTN2 and 2 DCTN3. The 4 DCNT2 (via N-terminus) bind the ACTR1A filament and act as molecular rulers to determine the length. The pointed end is important for binding dynein-dynactin cargo adapters. Consists of 4 subunits: ACTR10, DCNT4, DCTN5 and DCTN6. The barbed end is composed of a CAPZA1:CAPZB heterodimers, which binds ACTR1A/ACTB filament and dynactin and stabilizes dynactin. Interacts with ATP7B, but not ATP7A, in a copper-dependent manner. Interacts with ANK2; this interaction is required for localization at costameres. Interacts with N4BP2L1.

Its subcellular location is the cytoplasm. It is found in the cytoskeleton. The protein resides in the microtubule organizing center. The protein localises to the centrosome. It localises to the stress fiber. Its subcellular location is the cell cortex. It is found in the myofibril. The protein resides in the sarcomere. Part of the dynactin complex that activates the molecular motor dynein for ultra-processive transport along microtubules. This Pongo abelii (Sumatran orangutan) protein is Dynactin subunit 4 (DCTN4).